The following is a 298-amino-acid chain: Elongation factor Ts (298 aa).

An involved in Mg(2+) ion dislocation from EF-Tu region spans residues 80-83 (TDFV).

It belongs to the EF-Ts family.

It localises to the cytoplasm. Functionally, associates with the EF-Tu.GDP complex and induces the exchange of GDP to GTP. It remains bound to the aminoacyl-tRNA.EF-Tu.GTP complex up to the GTP hydrolysis stage on the ribosome. The chain is Elongation factor Ts from Paracidovorax citrulli (strain AAC00-1) (Acidovorax citrulli).